The primary structure comprises 145 residues: Ecdysteroid-regulated 16 kDa protein (145 aa).

Positions 1–16 are cleaved as a signal peptide; it reads MLFYITVTVLLVSAQA. Intrachain disulfides connect Cys-22–Cys-137 and Cys-90–Cys-97. Asn-51 is a glycosylation site (N-linked (GlcNAc...) asparagine).

Belongs to the NPC2 family.

The protein localises to the secreted. The protein is Ecdysteroid-regulated 16 kDa protein (ESR16) of Manduca sexta (Tobacco hawkmoth).